The following is a 375-amino-acid chain: Myb family transcription factor PHL5 (375 aa).

The span at 159–171 shows a compositional bias: polar residues; sequence TSSQHQPKQSHPR. Residues 159-178 are disordered; it reads TSSQHQPKQSHPRFSSPPSF. An HTH myb-type domain is found at 189–249; the sequence is CVNKTRIRWT…HLQKYRIAKY (61 aa). A DNA-binding region (H-T-H motif) is located at residues 220-245; it reads PKAILKRMDSDGLTIFHVKSHLQKYR. The stretch at 279–299 forms a coiled coil; sequence KEALQLQLDVQRHLHEQLEIQ. The short motif at 292–297 is the LHEQLE element; the sequence is LHEQLE.

Belongs to the MYB-CC family.

The protein resides in the nucleus. The sequence is that of Myb family transcription factor PHL5 from Arabidopsis thaliana (Mouse-ear cress).